Reading from the N-terminus, the 557-residue chain is MTFQSDIEIARAANKLPIQEIGARLGIPSGDLIPYGHDKAKVSQGFIRGLADRPDGKLILVTAINPTPAGEGKTTTTVGLGDGLNRIGKRAVICIREASLGPNFGMKGGAAGGGRSQVVPMEDMNLHFTGDFHAITSAHNLLSAMIDNHIYWGNDLGLDARRITWRRVMDMNDRALRDMVVNLGGVSNGFPRQTGFDITVASEVMAILCLAEDLEDLERRLGGIVVGYRRDRSPVFCRDLKADGAMAVLLKDAMQPNLVQTIENNPAFVHGGPFANIAHGCNSVIATRTALKLADYVVTEAGFGADLGAEKFFDIKCRKAGLKPSAAVVVATVRALKMNGGVAREDLGREDVAALKRGCANLGRHIANVKGFGVPVVVAINHFTTDTEAEIEAVRAYAAGQGAEAILCRHWADGSAGIEDLARKVVQLAETPSMFAPLYPDEMPLFEKMETVARRIYHAHDVIADHVIRDQLRAWEDAGYGALPVCMAKTQYSFTTDAAIRGAPEGHSVPIREVRLSAGAGFVVAICGEIRTMPGLPREPAAEVIRLNGEGRIEGLF.

Residue T67–T74 coordinates ATP.

This sequence belongs to the formate--tetrahydrofolate ligase family.

The enzyme catalyses (6S)-5,6,7,8-tetrahydrofolate + formate + ATP = (6R)-10-formyltetrahydrofolate + ADP + phosphate. It functions in the pathway one-carbon metabolism; tetrahydrofolate interconversion. This Cereibacter sphaeroides (strain ATCC 17025 / ATH 2.4.3) (Rhodobacter sphaeroides) protein is Formate--tetrahydrofolate ligase.